Here is a 1134-residue protein sequence, read N- to C-terminus: Sterol regulatory element-binding protein 1 (1134 aa).

Residues 1–60 (MDELAFGEAALEQTLAEMCELDTAVLNDIEDMLQLINNQDSDFPGLFDAPYAGGETGDTG) are transcriptional activation (acidic). The Cytoplasmic segment spans residues 1-477 (MDELAFGEAA…HSRGMLDRSR (477 aa)). Positions 27–35 (NDIEDMLQL) match the 9aaTAD motif. A disordered region spans residues 46–73 (LFDAPYAGGETGDTGPSSPGANSPESFS). The segment covering 59-69 (TGPSSPGANSP) has biased composition (polar residues). Phosphoserine is present on residues Ser-96 and Ser-115. 2 disordered regions span residues 130-149 (LQPAAPQPSPGTLLPPSFPA) and 170-195 (SGTLPGNTQQPPSSLPLAPAPGVLPT). Polar residues predominate over residues 170–179 (SGTLPGNTQQ). The interval 227–487 (QQVPVVLQPH…LALCVLAFLC (261 aa)) is interaction with LMNA. One can recognise a bHLH domain in the interval 317–367 (EKRTAHNAIEKRYRSSINDKIVELKDLVVGTEAKLNKSAVLRKAIDYIRFL). Ser-331 and Ser-332 each carry phosphoserine; by SIK1. Residues 367 to 388 (LQHSNQKLKQENLTLRSAHKSK) are leucine-zipper. Phosphoserine; by AMPK is present on Ser-389. At Ser-395 the chain carries Phosphoserine; by SIK1. The segment at 415–468 (VETLTPPPSDAGSPSQSSPLSFGSRASSSGGSDSEPDSPAFEDSQVKAQRLPSH) is disordered. The span at 424-453 (DAGSPSQSSPLSFGSRASSSGGSDSEPDSP) shows a compositional bias: low complexity. At Ser-448 the chain carries Phosphoserine. Residues 478–498 (LALCVLAFLCLTCNPLASLFG) traverse the membrane as a helical segment. Topologically, residues 499–536 (WGILTPSDATGTHRSSGRSMLEAESRDGSNWTQWLLPP) are lumenal. A helical transmembrane segment spans residues 537–557 (LVWLANGLLVLACLALLFVYG). The Cytoplasmic segment spans residues 558-1134 (EPVTRPHSGP…LGGGTTVTSS (577 aa)). A Phosphoserine modification is found at Ser-1047.

Belongs to the SREBP family. Forms a tight complex with SCAP, the SCAP-SREBP complex, in the endoplasmic reticulum membrane and the Golgi apparatus. Interacts with PAQR3; the interaction anchors the SCAP-SREBP complex to the Golgi apparatus in low cholesterol conditions. As to quaternary structure, efficient DNA binding of the soluble transcription factor fragment requires dimerization with another bHLH protein. Interacts with CEBPA, the interaction produces a transcriptional synergy. Interacts with LMNA. Processed in the Golgi apparatus, releasing the protein from the membrane. At low cholesterol the SCAP-SREBP complex is recruited into COPII vesicles for export from the endoplasmic reticulum. In the Golgi, complex SREBPs are cleaved sequentially by site-1 (MBTPS1, S1P) and site-2 (MBTPS2, S2P) proteases. The first cleavage by site-1 protease occurs within the luminal loop, the second cleavage by site-2 protease occurs within the first transmembrane domain, releasing the transcription factor from the Golgi membrane. Post-translationally, phosphorylated by AMPK, leading to suppress protein processing and nuclear translocation, and repress target gene expression. Phosphorylation at Ser-389 by SIK1 represses activity possibly by inhibiting DNA-binding. In terms of processing, SCAP-free SREBF1 is ubiquitinated by the BCR(ARMC5) complex, leading to its degradation. Ubiquitinated; the nuclear form has a rapid turnover and is rapidly ubiquitinated and degraded by the proteasome in the nucleus. Predominant isoform expressed in most tissues. Predominates in liver, adrenal gland, brain and adipose tissue. Also found in kidney, thymus, testis, muscle, jejunum, and ileum. In terms of tissue distribution, expressed only in select tissues, such as intestinal epithelial, heart, macrophage and bone marrow dendritic cells. Also found in kidney, thymus, testis, muscle, jejunum, and ileum.

It is found in the endoplasmic reticulum membrane. Its subcellular location is the golgi apparatus membrane. The protein resides in the cytoplasmic vesicle. The protein localises to the COPII-coated vesicle membrane. It localises to the nucleus. Its activity is regulated as follows. Activation by cleavage is down-regulated upon activation of SIRT3-dependent PRKAA1/AMPK-alpha signaling cascade which leads to inhibition of ATP-consuming lipogenesis to restore cellular energy balance. Functionally, precursor of the transcription factor form (Processed sterol regulatory element-binding protein 1), which is embedded in the endoplasmic reticulum membrane. Low sterol concentrations promote processing of this form, releasing the transcription factor form that translocates into the nucleus and activates transcription of genes involved in cholesterol biosynthesis and lipid homeostasis. In terms of biological role, key transcription factor that regulates expression of genes involved in cholesterol biosynthesis and lipid homeostasis. Binds to the sterol regulatory element 1 (SRE-1) (5'-ATCACCCCAC-3'). Has dual sequence specificity binding to both an E-box motif (5'-ATCACGTGA-3') and to SRE-1 (5'-ATCACCCCAC-3'). Regulates the promoters of genes involved in cholesterol biosynthesis and the LDL receptor (LDLR) pathway of sterol regulation. Isoform expressed only in select tissues, which has higher transcriptional activity compared to SREBP-1C. Able to stimulate both lipogenic and cholesterogenic gene expression. Has a role in the nutritional regulation of fatty acids and triglycerides in lipogenic organs such as the liver. Required for innate immune response in macrophages by regulating lipid metabolism. Its function is as follows. Predominant isoform expressed in most tissues, which has weaker transcriptional activity compared to isoform SREBP-1A. Primarily controls expression of lipogenic gene. Strongly activates global lipid synthesis in rapidly growing cells. The polypeptide is Sterol regulatory element-binding protein 1 (Mus musculus (Mouse)).